A 125-amino-acid chain; its full sequence is Calcitonin receptor-stimulating peptide 3 (125 aa).

The first 25 residues, 1 to 25 (MGFWKFPPFLILSILVLYQAGMLHA), serve as a signal peptide directing secretion. The propeptide occupies 26–79 (APFRMALGSSFDSATLTEEEMSLLLVAMVKDYVQMKATVLEQETEDFSITTQER). Cys-81 and Cys-86 form a disulfide bridge. A Leucine amide modification is found at Leu-116. Positions 122–125 (QPQA) are excised as a propeptide.

This sequence belongs to the calcitonin family. As to expression, mainly expressed in the thyroid gland and CNS. Found in the nerve cells of cerebrum, hippocampus, hypothalamus, pons/midbrain and thalamus.

The protein localises to the secreted. The chain is Calcitonin receptor-stimulating peptide 3 (CRSP3) from Sus scrofa (Pig).